The primary structure comprises 550 residues: (+)-germacrene D synthase (550 aa).

Aspartate 304, aspartate 308, and glutamate 455 together coordinate Mg(2+). A DDXXD motif motif is present at residues 304–308 (DDIYD).

Belongs to the terpene synthase family. Tpsa subfamily. Mg(2+) serves as cofactor. Mn(2+) is required as a cofactor. The cofactor is Co(2+). Requires Ni(2+) as cofactor.

Its subcellular location is the cytoplasm. It catalyses the reaction (2E,6E)-farnesyl diphosphate = (+)-germacrene D + diphosphate. The protein operates within secondary metabolite biosynthesis; terpenoid biosynthesis. Functionally, involved in the biosynthesis of germacrene D. Can use farnesyl diphosphate as substrate, but not geranyl diphosphate. Produces mainly (+)-germacrene D along with germacrene B and a number of minor by-products. This is (+)-germacrene D synthase from Zingiber officinale (Ginger).